We begin with the raw amino-acid sequence, 163 residues long: Phosphopantetheine adenylyltransferase (163 aa).

Ser-9 provides a ligand contact to substrate. Residues 9-10 (SF) and His-17 contribute to the ATP site. Lys-41, Thr-73, and Arg-87 together coordinate substrate. ATP-binding positions include 88-90 (GLR), Glu-98, and 123-129 (YSFISSG).

This sequence belongs to the bacterial CoaD family. As to quaternary structure, homohexamer. The cofactor is Mg(2+).

The protein resides in the cytoplasm. It catalyses the reaction (R)-4'-phosphopantetheine + ATP + H(+) = 3'-dephospho-CoA + diphosphate. It functions in the pathway cofactor biosynthesis; coenzyme A biosynthesis; CoA from (R)-pantothenate: step 4/5. Its function is as follows. Reversibly transfers an adenylyl group from ATP to 4'-phosphopantetheine, yielding dephospho-CoA (dPCoA) and pyrophosphate. In Desulforudis audaxviator (strain MP104C), this protein is Phosphopantetheine adenylyltransferase.